The sequence spans 188 residues: COMM domain-containing protein 1 (188 aa).

The interval 1-122 (MAAELEGSKC…CWDRGLRSLS (122 aa)) is sufficient for interaction with SLC12A2. H100, M109, and H133 together coordinate Cu cation. Residues 117–185 (GLRSLSWRVD…EVEESISTLM (69 aa)) form the COMM domain. Residues 124-188 (RVDGKSQSRH…ESISTLMQPA (65 aa)) are required for binding to PtdIns(4,5)P2.

The protein belongs to the COMM domain-containing protein 1 family. In terms of assembly, component of the commander complex consisting of the CCC subcomplex and the retriever subcomplex. Component of the CCC (COMMD/CCDC22/CCDC93) subcomplex consisting of COMMD1, COMMD2, COMMD3, COMMD4, COMMD5, COMMD6, COMMD7, COMMD8, COMMD9, COMMD10, CCDC22 and CCDC93; within the complex forms a heterodimer with COMMD6. Interacts with VPS35L; the interaction associates the CCC complex with the retriever complex. Identified in a complex with an E3 ubiquitin ligase complex composed of TCEB1/elongin C, CUL2, SOCS1 and RBX1; in the complex interacts directly with SOCS1 and CUL2. Identified in a complex with NF-kappa-B. Interacts directly with SLC12A2. Interacts directly with ATP7B (via the N-terminal region). Interacts with ATP7A. Interacts with FAM107A; this interaction stabilizes COMMD1 in the nucleus. Interacts with CCS, CDKN2A, RELA, REL, RELB, NFKB1/p105, NFKB2/p100, NFKBIB, SCNN1D, SCNN1B, CFTR, CLU, SGK1, AKT1, CUL1, CUL2, CUL3, CUL4A, CUL4B, CUL5, CUL7, HIF1A. Post-translationally, ubiquitinated; undergoes both 'Lys-63'- and 'Lys-48'-linked polyubiquitination. Ubiquitinated by XIAP, leading to its proteasomal degradation.

The protein resides in the nucleus. It localises to the cytoplasm. Its subcellular location is the endosome membrane. It is found in the cytoplasmic vesicle. The protein localises to the early endosome. The protein resides in the recycling endosome. In terms of biological role, scaffold protein in the commander complex that is essential for endosomal recycling of transmembrane cargos; the commander complex is composed of the CCC subcomplex and the retriever subcomplex. Can modulate activity of cullin-RING E3 ubiquitin ligase (CRL) complexes by displacing CAND1; in vitro promotes CRL E3 activity and dissociates CAND1 from CUL1 and CUL2. Promotes ubiquitination of NF-kappa-B subunit RELA and its subsequent proteasomal degradation. Down-regulates NF-kappa-B activity. Involved in the regulation of membrane expression and ubiquitination of SLC12A2. Modulates Na(+) transport in epithelial cells by regulation of apical cell surface expression of amiloride-sensitive sodium channel (ENaC) subunits and by promoting their ubiquitination presumably involving NEDD4L. Promotes the localization of SCNN1D to recycling endosomes. Promotes CFTR cell surface expression through regulation of its ubiquitination. Down-regulates SOD1 activity by interfering with its homodimerization. Plays a role in copper ion homeostasis. Involved in copper-dependent ATP7A trafficking between the trans-Golgi network and vesicles in the cell periphery; the function is proposed to depend on its association within the CCC complex and cooperation with the WASH complex on early endosomes. Can bind one copper ion per monomer. May function to facilitate biliary copper excretion within hepatocytes. Binds to phosphatidylinositol 4,5-bisphosphate (PtdIns(4,5)P2). Involved in the regulation of HIF1A-mediated transcription; competes with ARNT/Hif-1-beta for binding to HIF1A resulting in decreased DNA binding and impaired transcriptional activation by HIF-1. Negatively regulates neuroblastoma G1/S phase cell cycle progression and cell proliferation by stimulating ubiquitination of NF-kappa-B subunit RELA and NF-kappa-B degradation in a FAM107A- and actin-dependent manner. This chain is COMM domain-containing protein 1 (COMMD1), found in Bos taurus (Bovine).